Here is a 335-residue protein sequence, read N- to C-terminus: NADH-quinone oxidoreductase subunit H (335 aa).

The next 8 membrane-spanning stretches (helical) occupy residues 11–31 (VILTVIKAIVILLAVVVAGAL), 81–101 (VIFTLAPVVAMSALLIAFAII), 114–134 (IGLLFFFAMAGLSVYAVLFAG), 154–174 (VSYEVFMGLALMGIVVQVGSF), 187–207 (LWFIIPQFFGFCTFFIAGVAV), 238–258 (FFVGEYIGIILISALLVTLFF), 270–290 (QLSFVWFALKTAFFILLFILL), and 307–327 (WKFCLPLTLINLLVTAAIVLW).

The protein belongs to the complex I subunit 1 family. In terms of assembly, NDH-1 is composed of 13 different subunits. Subunits NuoA, H, J, K, L, M, N constitute the membrane sector of the complex.

Its subcellular location is the cell inner membrane. It catalyses the reaction a quinone + NADH + 5 H(+)(in) = a quinol + NAD(+) + 4 H(+)(out). Functionally, NDH-1 shuttles electrons from NADH, via FMN and iron-sulfur (Fe-S) centers, to quinones in the respiratory chain. The immediate electron acceptor for the enzyme in this species is believed to be ubiquinone. Couples the redox reaction to proton translocation (for every two electrons transferred, four hydrogen ions are translocated across the cytoplasmic membrane), and thus conserves the redox energy in a proton gradient. This subunit may bind ubiquinone. The polypeptide is NADH-quinone oxidoreductase subunit H (Pseudomonas fluorescens (strain Pf0-1)).